Consider the following 590-residue polypeptide: G protein-coupled receptor kinase 5 (590 aa).

An N-terminal region spans residues 1–185 (MELENIVANT…LERQPVTKNT (185 aa)). The interval 20 to 39 (GGKRKGKSKKWKEILKFPHI) is interaction with calmodulin. The RGS domain occupies 53–171 (YCSLCDKQPV…LDSMYFDRFL (119 aa)). The 263-residue stretch at 186–448 (FRQYRVLGKG…AAEVKRHPFF (263 aa)) folds into the Protein kinase domain. ATP-binding positions include 192-200 (LGKGGFGEV) and Lys215. The Proton acceptor role is filled by Asp311. The Nuclear localization signal motif lies at 388-395 (RKEKVKRE). The AGC-kinase C-terminal domain maps to 449 to 514 (RNMNFKRLEA…GSVPIPWQSE (66 aa)). Ser484 is modified (phosphoserine; by autocatalysis). Thr485 is modified (phosphothreonine; by autocatalysis). A sufficient for membrane localization region spans residues 546–565 (PKKGLLQRLFKRQHQNNSKS). Residues 554–590 (LFKRQHQNNSKSSPNSKTSFNHHINSNHVSSNSTGSS) are disordered. The span at 561 to 590 (NNSKSSPNSKTSFNHHINSNHVSSNSTGSS) shows a compositional bias: low complexity. A Phosphoserine modification is found at Ser579.

This sequence belongs to the protein kinase superfamily. AGC Ser/Thr protein kinase family. GPRK subfamily. As to quaternary structure, interacts with ST13 (via the C-terminus 303-319 AA). Interacts with TP53/p53. Interacts with HTR4 (via C-terminus 330-346 AA); this interaction is promoted by 5-HT (serotonin). Interacts with HDAC5. Interacts with GIT1. Autophosphorylated. Autophosphorylation may play a critical role in the regulation of GRK5 kinase activity. As to expression, highest levels in lung, heart, retina, lingual epithelium. Very little in brain, liver, kidney.

It localises to the cytoplasm. The protein resides in the nucleus. Its subcellular location is the cell membrane. It carries out the reaction [G-protein-coupled receptor] + ATP = [G-protein-coupled receptor]-phosphate + ADP + H(+). With respect to regulation, inhibited by calmodulin with an IC(50) of 50 nM. Calmodulin inhibits GRK5 association with receptor and phospholipid. Serine/threonine kinase that phosphorylates preferentially the activated forms of a variety of G-protein-coupled receptors (GPCRs). Such receptor phosphorylation initiates beta-arrestin-mediated receptor desensitization, internalization, and signaling events leading to their down-regulation. Phosphorylates a variety of GPCRs, including adrenergic receptors (Beta-2 adrenergic receptor), muscarinic acetylcholine receptors (more specifically Gi-coupled M2/M4 subtypes), dopamine receptors and opioid receptors. In addition to GPCRs, also phosphorylates various substrates: Hsc70-interacting protein/ST13, TP53/p53, HDAC5, and arrestin-1/ARRB1. Phosphorylation of ARRB1 by GRK5 inhibits G-protein independent MAPK1/MAPK3 signaling downstream of 5HT4-receptors. Phosphorylation of HDAC5, a repressor of myocyte enhancer factor 2 (MEF2) leading to nuclear export of HDAC5 and allowing MEF2-mediated transcription. Phosphorylation of TP53/p53, a crucial tumor suppressor, inhibits TP53/p53-mediated apoptosis. Phosphorylation of ST13 regulates internalization of the chemokine receptor. Phosphorylates rhodopsin (RHO) (in vitro) and a non G-protein-coupled receptor, LRP6 during Wnt signaling (in vitro). The polypeptide is G protein-coupled receptor kinase 5 (GRK5) (Bos taurus (Bovine)).